Consider the following 290-residue polypeptide: Cilia- and flagella-associated protein 298 (290 aa).

It belongs to the CFAP298 family. As to quaternary structure, interacts with dnaaf1/swt. Interacts with lrrc6/sea. Interacts with dvl (via DEP and PDZ domains). As to expression, strongly expressed in ciliated tissues of the embryonic trunk, including the pronephric ducts and spinal canal.

Its subcellular location is the cytoplasm. The protein resides in the cytoskeleton. It localises to the cilium basal body. Its function is as follows. Plays a role in motile cilium function, possibly by acting on outer dynein arm assembly. Seems to be important for initiation rather than maintenance of cilium motility. Required for correct positioning of cilia at the apical cell surface, suggesting an additional role in the planar cell polarity (PCP) pathway. May suppress canonical Wnt signaling activity. The sequence is that of Cilia- and flagella-associated protein 298 from Danio rerio (Zebrafish).